Here is a 629-residue protein sequence, read N- to C-terminus: ATP-dependent RNA helicase DeaD (629 aa).

A Q motif motif is present at residues 6–34; the sequence is TTFADLGLKAPILEALNDLGYEKPSPIQA. In terms of domain architecture, Helicase ATP-binding spans 37-208; it reads IPHLLNGRDV…RRFMKEPQEV (172 aa). 50–57 contributes to the ATP binding site; that stretch reads AQTGSGKT. The DEAD box motif lies at 156-159; that stretch reads DEAD. A Helicase C-terminal domain is found at 232–379; it reads KNEALVRFLE…EVELPNAELL (148 aa). Disordered stretches follow at residues 438-481 and 560-629; these read LIVP…RERR and LGDA…GGDA. Basic and acidic residues-rich tracts occupy residues 446–481 and 568–629; these read MRPKREFRDRDDRGPRDRNDRGPRGDREDRPRRERR and GGER…GGDA.

It belongs to the DEAD box helicase family. DeaD/CsdA subfamily. As to quaternary structure, interacts with the 50S ribosomal subunit upon shifting to 15 degrees Celsius. Also found associated with the RNA degradosome at 15 degrees Celsius; binds RNase E (rne).

The protein resides in the cytoplasm. The enzyme catalyses ATP + H2O = ADP + phosphate + H(+). Functionally, DEAD-box RNA helicase involved in various cellular processes at low temperature, including ribosome biogenesis, mRNA degradation and translation initiation. Exhibits RNA-stimulated ATP hydrolysis and RNA unwinding activity at low temperature. Involved in 50S ribosomal subunit assembly, acting after SrmB, and could also play a role in the biogenesis of the 30S ribosomal subunit. In addition, is involved in mRNA decay, via formation of a cold-shock degradosome with RNase E. Also stimulates translation of some mRNAs, probably at the level of initiation. In Escherichia coli (strain K12), this protein is ATP-dependent RNA helicase DeaD.